Here is a 336-residue protein sequence, read N- to C-terminus: Phosphoribosylformylglycinamidine cyclo-ligase (336 aa).

It belongs to the AIR synthase family.

The protein localises to the cytoplasm. The enzyme catalyses 2-formamido-N(1)-(5-O-phospho-beta-D-ribosyl)acetamidine + ATP = 5-amino-1-(5-phospho-beta-D-ribosyl)imidazole + ADP + phosphate + H(+). The protein operates within purine metabolism; IMP biosynthesis via de novo pathway; 5-amino-1-(5-phospho-D-ribosyl)imidazole from N(2)-formyl-N(1)-(5-phospho-D-ribosyl)glycinamide: step 2/2. The chain is Phosphoribosylformylglycinamidine cyclo-ligase from Caldanaerobacter subterraneus subsp. tengcongensis (strain DSM 15242 / JCM 11007 / NBRC 100824 / MB4) (Thermoanaerobacter tengcongensis).